The following is a 206-amino-acid chain: MNKANLFIISAPSGAGKTSLVRALVKALAEIKISISHTTRPKRPGDQEGVDYFFIDETRFQAMVKEGAFLEHATIYERHYGTEKDWVLRQLKAGRDVLLEIDWQGARQIRELFPPALSIFILPPSIEALRERLIKRRQDDTAIIEQRLALAREEMAHYKEFDYLVVNDNFDQAVQNLIHIISAERLQRDVQEKKLSRLLAELVEKQ.

The Guanylate kinase-like domain maps to 4–182 (ANLFIISAPS…AVQNLIHIIS (179 aa)). 11–18 (APSGAGKT) is a binding site for ATP.

Belongs to the guanylate kinase family.

It localises to the cytoplasm. It carries out the reaction GMP + ATP = GDP + ADP. In terms of biological role, essential for recycling GMP and indirectly, cGMP. The chain is Guanylate kinase from Coxiella burnetii (strain RSA 493 / Nine Mile phase I).